The chain runs to 1220 residues: DNA-directed RNA polymerase subunit beta (1220 aa).

This sequence belongs to the RNA polymerase beta chain family. In terms of assembly, the RNAP catalytic core consists of 2 alpha, 1 beta, 1 beta' and 1 omega subunit. When a sigma factor is associated with the core the holoenzyme is formed, which can initiate transcription.

It carries out the reaction RNA(n) + a ribonucleoside 5'-triphosphate = RNA(n+1) + diphosphate. Functionally, DNA-dependent RNA polymerase catalyzes the transcription of DNA into RNA using the four ribonucleoside triphosphates as substrates. The chain is DNA-directed RNA polymerase subunit beta from Mesomycoplasma hyopneumoniae (strain 7448) (Mycoplasma hyopneumoniae).